The chain runs to 133 residues: Small ribosomal subunit protein eS24y (133 aa).

A disordered region spans residues 104–133; sequence KSRKQIKERKNRAKKIRGVKKTKAGDTKKK. Basic residues predominate over residues 109–125; the sequence is IKERKNRAKKIRGVKKT.

It belongs to the eukaryotic ribosomal protein eS24 family.

This Arabidopsis thaliana (Mouse-ear cress) protein is Small ribosomal subunit protein eS24y (RPS24B).